A 255-amino-acid polypeptide reads, in one-letter code: 4-hydroxy-tetrahydrodipicolinate reductase (255 aa).

Residues 8–13 (GSTGRM), 88–90 (ATT), and 112–115 (SSNM) each bind NAD(+). The active-site Proton donor/acceptor is His-144. His-145 is a binding site for (S)-2,3,4,5-tetrahydrodipicolinate. The active-site Proton donor is the Lys-148. A (S)-2,3,4,5-tetrahydrodipicolinate-binding site is contributed by 154 to 155 (GT).

Belongs to the DapB family.

The protein localises to the cytoplasm. It carries out the reaction (S)-2,3,4,5-tetrahydrodipicolinate + NAD(+) + H2O = (2S,4S)-4-hydroxy-2,3,4,5-tetrahydrodipicolinate + NADH + H(+). The catalysed reaction is (S)-2,3,4,5-tetrahydrodipicolinate + NADP(+) + H2O = (2S,4S)-4-hydroxy-2,3,4,5-tetrahydrodipicolinate + NADPH + H(+). Its pathway is amino-acid biosynthesis; L-lysine biosynthesis via DAP pathway; (S)-tetrahydrodipicolinate from L-aspartate: step 4/4. Catalyzes the conversion of 4-hydroxy-tetrahydrodipicolinate (HTPA) to tetrahydrodipicolinate. The sequence is that of 4-hydroxy-tetrahydrodipicolinate reductase from Sulfurovum sp. (strain NBC37-1).